We begin with the raw amino-acid sequence, 839 residues long: Homeobox-leucine zipper protein HOX10 (839 aa).

Disordered regions lie at residues 1–24 and 132–157; these read MAAA…SGMD and QNTP…RDAS. The homeobox DNA-binding region spans 24–87; sequence DSGKYVRYTP…NRRCRDKQRK (64 aa). Positions 91–134 form a coiled coil; that stretch reads RLQAVNRKLTAMNKLLMEENERLQKQVSQLVHENAHMRQQLQNT. The 229-residue stretch at 155-383 folds into the START domain; it reads DASNPSGLLS…IAQETSGEVV (229 aa).

The protein belongs to the HD-ZIP homeobox family. Class III subfamily. Expressed in stems, leaf sheaths and blades and panicles.

It is found in the nucleus. In terms of biological role, probable transcription factor. The sequence is that of Homeobox-leucine zipper protein HOX10 (HOX10) from Oryza sativa subsp. japonica (Rice).